The following is a 491-amino-acid chain: MKNQDQALIFEVSKEGRIGYSLPKLDVEEVKLEDVFESDYIRVEDAELPEVSELDIMRHYTALSNRNHGVDSGFYPLGSCTMKYNPKINESVARFAGFANIHPLQDEKTVQGAMELMYDLQEHLIEITGMDTVTLQPAAGAHGEWTGLMLIRAYHEANGDFNRTKVIVPDSAHGTNPASATVAGFETITVKSNENGLVDLEDLKRVVNEETAALMLTNPNTLGLFEENILEMAEIVHNAGGKLYYDGANLNAVLSQARPGDMGFDVVHLNLHKTFTGPHGGGGPGSGPVGVKADLIPYLPKPILEKTENGYHFNYDRPEAIGRVKPFYGNFGINVRAYTYIRSMGPDGLRAVTEYAVLNANYMMRRLAPFYDLPFDRHCKHEFVLSGRRQKKLGVRTLDIAKRLLDFGYHPPTIYFPLNVEECIMIEPTETESKETLDGFIDKMIQIAKEVEENPEVVQEAPHTTVIKRLDETMAARKPVLRYAKPAPVQV.

Lysine 273 is subject to N6-(pyridoxal phosphate)lysine.

The protein belongs to the GcvP family. C-terminal subunit subfamily. As to quaternary structure, the glycine cleavage system is composed of four proteins: P, T, L and H. In this organism, the P 'protein' is a heterodimer of two subunits. The cofactor is pyridoxal 5'-phosphate.

The catalysed reaction is N(6)-[(R)-lipoyl]-L-lysyl-[glycine-cleavage complex H protein] + glycine + H(+) = N(6)-[(R)-S(8)-aminomethyldihydrolipoyl]-L-lysyl-[glycine-cleavage complex H protein] + CO2. Its function is as follows. The glycine cleavage system catalyzes the degradation of glycine. The P protein binds the alpha-amino group of glycine through its pyridoxal phosphate cofactor; CO(2) is released and the remaining methylamine moiety is then transferred to the lipoamide cofactor of the H protein. This chain is Probable glycine dehydrogenase (decarboxylating) subunit 2, found in Bacillus cereus (strain B4264).